The following is a 44-amino-acid chain: Photosystem I reaction center subunit IX 2 (44 aa).

A helical membrane pass occupies residues 13-35 (APVLATLWLSSTAVILIGVNSYF).

It belongs to the PsaJ family.

Its subcellular location is the cellular thylakoid membrane. Functionally, may help in the organization of the PsaE and PsaF subunits. The sequence is that of Photosystem I reaction center subunit IX 2 (psaJ2) from Prochlorococcus marinus (strain NATL2A).